Here is a 968-residue protein sequence, read N- to C-terminus: Isoleucine--tRNA ligase (968 aa).

The 'HIGH' region signature appears at 68 to 78 (PYANGALHMGH). Glu582 lines the L-isoleucyl-5'-AMP pocket. Residues 623 to 627 (KMSKS) carry the 'KMSKS' region motif. Lys626 contributes to the ATP binding site. Zn(2+) contacts are provided by Cys936, Cys939, Cys956, and Cys959.

It belongs to the class-I aminoacyl-tRNA synthetase family. IleS type 1 subfamily. In terms of assembly, monomer. The cofactor is Zn(2+).

The protein resides in the cytoplasm. The enzyme catalyses tRNA(Ile) + L-isoleucine + ATP = L-isoleucyl-tRNA(Ile) + AMP + diphosphate. Its function is as follows. Catalyzes the attachment of isoleucine to tRNA(Ile). As IleRS can inadvertently accommodate and process structurally similar amino acids such as valine, to avoid such errors it has two additional distinct tRNA(Ile)-dependent editing activities. One activity is designated as 'pretransfer' editing and involves the hydrolysis of activated Val-AMP. The other activity is designated 'posttransfer' editing and involves deacylation of mischarged Val-tRNA(Ile). This is Isoleucine--tRNA ligase from Prochlorococcus marinus (strain MIT 9312).